A 321-amino-acid chain; its full sequence is G-protein coupled receptor homolog ECRF3 (321 aa).

The Extracellular segment spans residues 1-34; it reads MEVKLDFSSEDFSNYSYNYSGDIYYGDVAPCVVN. Residues asparagine 14 and asparagine 18 are each glycosylated (N-linked (GlcNAc...) asparagine; by host). Residues 35 to 51 form a helical membrane-spanning segment; that stretch reads FLISESALAFIYVLMFL. Over 52–76 the chain is Cytoplasmic; sequence CNAIGNSLVLRTFLKYRAQAQSFDY. The helical transmembrane segment at 77–93 threads the bilayer; it reads LMMGFCLNSLFLAGYLL. Over 94-124 the chain is Extracellular; it reads MRLLRMFEIFMNTELCKLEAFFLNLSIYWSP. Asparagine 117 carries N-linked (GlcNAc...) asparagine; by host glycosylation. The helical transmembrane segment at 125 to 141 threads the bilayer; the sequence is FILVFISVLRCLLIFCA. Topologically, residues 142–149 are cytoplasmic; that stretch reads TRLWVKKT. A helical membrane pass occupies residues 150–166; that stretch reads LIGQVFLCCSFVLACFG. At 167 to 196 the chain is on the extracellular side; it reads ALPHVMVTSYYEPSSCIEEDGVLTEQLRTK. The chain crosses the membrane as a helical span at residues 197-215; that stretch reads LNTFHTWYSFAGPLFITVI. Topologically, residues 216–234 are cytoplasmic; sequence CYSMSCYKLFKTKLSKRAE. A helical transmembrane segment spans residues 235–251; the sequence is VVTIITMTTLLFIVFCI. The Extracellular segment spans residues 252–286; it reads PYYIMESIDTLLRVGVIEETCAKRSAIVYGIQCTY. Residues 287–303 form a helical membrane-spanning segment; it reads MLLVLYYCMLPLMFAMF. Topologically, residues 304–321 are cytoplasmic; it reads GSLFRQRMAAWCKTICHC.

Belongs to the G-protein coupled receptor 1 family.

The protein localises to the host cell membrane. Its function is as follows. May be highly relevant to the process of cellular transformation and rapid T-cell proliferation effected by HVS during latent infections of T-cells in susceptible hosts. This is G-protein coupled receptor homolog ECRF3 (74) from Saimiri sciureus (Common squirrel monkey).